The primary structure comprises 1497 residues: Dual oxidase 1 (1497 aa).

The N-terminal stretch at Met1–Gly21 is a signal peptide. Residues Ile22–Asp587 lie on the Extracellular side of the membrane. Positions Glu26–Tyr590 are peroxidase-like; mediates peroxidase activity. N-linked (GlcNAc...) asparagine glycosylation is found at Asn66, Asn305, Asn567, and Asn586. A helical membrane pass occupies residues Thr588 to Gly608. Residues Arg609–Gln986 lie on the Cytoplasmic side of the membrane. EF-hand domains lie at Ala817–Ala852 and Pro853–Thr888. A helical transmembrane segment spans residues His987 to Trp1007. Topologically, residues His1008–Ala1024 are extracellular. The chain crosses the membrane as a helical span at residues Gly1025–Leu1045. The Ferric oxidoreductase domain maps to Arg1030 to Met1210. The Cytoplasmic portion of the chain corresponds to Thr1046–Ser1068. Residues Ala1069 to Val1089 traverse the membrane as a helical segment. Over Gly1090–Leu1134 the chain is Extracellular. Residues Thr1135 to Ile1155 form a helical membrane-spanning segment. The Cytoplasmic segment spans residues Lys1156 to Arg1163. A helical membrane pass occupies residues Leu1164–Leu1184. Residues Leu1185 to Lys1189 lie on the Extracellular side of the membrane. The helical transmembrane segment at Phe1190–Met1210 threads the bilayer. An FAD-binding FR-type domain is found at Gln1211–Glu1318. The Cytoplasmic portion of the chain corresponds to Gln1211 to Phe1497.

In the N-terminal section; belongs to the peroxidase family. Interacts with doxa-1 and tsp-15. Interacts with rho-1. In terms of tissue distribution, expressed in hypodermal cells.

It is found in the membrane. The enzyme catalyses NADH + O2 + H(+) = H2O2 + NAD(+). It catalyses the reaction NADPH + O2 + H(+) = H2O2 + NADP(+). Its activity is regulated as follows. Peroxidase activity is inhibited by aminobenzohydrazide. Its function is as follows. Plays a role in cuticle biogenesis. In complex with doxa-1 and tsp-15, produces reactive oxygen species (ROS), which are probably used by mlt-7 for tyrosine cross-linking, thus stabilizing cuticular extracellular matrix. May regulate the production of ROS by playing a role in modulating proline catabolism. Required in combination with mlt-7 for correct formation of cross-links in cuticle collagens. Association with the GTPase rho-1 promotes ROS production and this interaction may be modulated by memo-1, in order to control the oxidative stress response and longevity. The sequence is that of Dual oxidase 1 from Caenorhabditis elegans.